We begin with the raw amino-acid sequence, 125 residues long: MADLAKIEEQLSSLTLMQAAELVKMLEEKWGVSAAAPITVASAGVAAPLAEAVTEKTEFEVVLTATGDKKVEVIKIVKDITGLGLIEAKKLVDEAPKSIKNNVKKAEAEEIKSKLEAAGAKVELK.

Belongs to the bacterial ribosomal protein bL12 family. As to quaternary structure, homodimer. Part of the ribosomal stalk of the 50S ribosomal subunit. Forms a multimeric L10(L12)X complex, where L10 forms an elongated spine to which 2 to 4 L12 dimers bind in a sequential fashion. Binds GTP-bound translation factors.

Its function is as follows. Forms part of the ribosomal stalk which helps the ribosome interact with GTP-bound translation factors. Is thus essential for accurate translation. This is Large ribosomal subunit protein bL12 from Rickettsia prowazekii (strain Madrid E).